A 932-amino-acid polypeptide reads, in one-letter code: Progesterone receptor (932 aa).

The AF3; mediates transcriptional activation stretch occupies residues 1–164; that stretch reads MTELKAKGPR…PATQGVLSPL (164 aa). Residues 1 to 254 form a disordered region; the sequence is MTELKAKGPR…GGAAAGGAAA (254 aa). The tract at residues 1–565 is modulating, Pro-Rich; the sequence is MTELKAKGPR…YSFESLPQKI (565 aa). S20 is modified (phosphoserine). The LXXL motif 1 signature appears at 55–59; the sequence is LDGLL. Phosphoserine is present on S81. Residues 88-103 are compositionally biased toward low complexity; the sequence is SRAEATRGAGGSSSSP. The LXXL motif 2 signature appears at 115-119; that stretch reads LDTLL. S130 and S162 each carry phosphoserine. The mediates transcriptional transrepression stretch occupies residues 165 to 304; that stretch reads MSRSGGKAGD…LATTVMDFIH (140 aa). The Nuclear localization signal motif lies at 183 to 187; the sequence is KVLPQ. 2 positions are modified to phosphoserine: S190 and S213. Residues 220-231 show a composition bias toward acidic residues; sequence EVEEEDGSESED. A compositionally biased stretch (low complexity) spans 232 to 254; the sequence is SAGPLLKGKPRALGGAAAGGAAA. The residue at position 293 (S293) is a Phosphoserine; by MAPK1. Positions 334–349 are enriched in low complexity; that stretch reads AASAFAPPRSSPSASS. A disordered region spans residues 334–356; the sequence is AASAFAPPRSSPSASSTPVAVGD. Residue S344 is modified to Phosphoserine; by MAPK. Residue K387 forms a Glycyl lysine isopeptide (Lys-Gly) (interchain with G-Cter in SUMO); alternate linkage. Residue K387 forms a Glycyl lysine isopeptide (Lys-Gly) (interchain with G-Cter in ubiquitin); alternate linkage. 2 disordered regions span residues 414–451 and 468–499; these read PDFPLGPPPPLPPRAPPSRPGEAAVTAAPASASVSSAS and PPQQGPFAPPPSKAPGAGGCLPPRDGLPSTAA. Residues 417–432 are compositionally biased toward pro residues; the sequence is PLGPPPPLPPRAPPSR. The span at 433 to 451 shows a compositional bias: low complexity; that stretch reads PGEAAVTAAPASASVSSAS. The segment at 455–545 is AF1; mediates transcriptional activation; that stretch reads STLECILYKA…VYPPYLNYLR (91 aa). Positions 470–480 are enriched in pro residues; the sequence is QQGPFAPPPSK. Residue K530 forms a Glycyl lysine isopeptide (Lys-Gly) (interchain with G-Cter in SUMO) linkage. NR C4-type zinc fingers lie at residues 566–586 and 602–626; these read CLICGDEASGCHYGVLTCGSC and CAGRNDCIVDKIRRKNCPACRLRKC. The nuclear receptor DNA-binding region spans 566–638; that stretch reads CLICGDEASG…AGMVLGGRKF (73 aa). Phosphoserine is present on S675. Positions 678–912 constitute an NR LBD domain; the sequence is QDIQLIPPLI…EFPEMMSEVI (235 aa). The AF2; mediates transcriptional activation stretch occupies residues 686–932; it reads LINLLMSIEP…MVKPLLFHKK (247 aa). R765 serves as a coordination point for progesterone.

This sequence belongs to the nuclear hormone receptor family. As to quaternary structure, interacts with SMARD1 and UNC45A. Interacts with CUEDC2; the interaction promotes ubiquitination, decreases sumoylation, and represses transcriptional activity. Interacts with PIAS3; the interaction promotes sumoylation of PR in a hormone-dependent manner, inhibits DNA-binding, and alters nuclear export. Interacts with SP1; the interaction requires ligand-induced phosphorylation on Ser-344 by ERK1/2-MAPK. Interacts with PRMT2. Interacts with NCOA2 and NCOA1. Interacts with KLF9. Interacts with GTF2B. In terms of processing, phosphorylated on multiple serine sites. Several of these sites are hormone-dependent. Phosphorylation on Ser-293 is highly hormone-dependent and modulates ubiquitination and sumoylation on Lys-387. Phosphorylation on Ser-102 and Ser-344 also requires induction by hormone. Basal phosphorylation on Ser-81, Ser-162 and Ser-190 is increased in response to progesterone and can be phosphorylated in vitro by the CDK2-A1 complex. Phosphorylation at Ser-162 and Ser-293, but not at Ser-190, is impaired during the G(2)/M phase of the cell cycle. Phosphorylation on Ser-344 by ERK1/2 MAPK is required for interaction with SP1. Sumoylation is hormone-dependent and represses transcriptional activity. Sumoylation on all three sites is enhanced by PIAS3. Desumoylated by SENP1. Sumoylation on Lys-387, the main site of sumoylation, is repressed by ubiquitination on the same site, and modulated by phosphorylation at Ser-293. Post-translationally, ubiquitination is hormone-dependent and represses sumoylation on the same site. Promoted by MAPK-mediated phosphorylation on Ser-293. Ubiquitinated by UBR5, leading to its degradation: UBR5 specifically recognizes and binds ligand-bound PGR when it is not associated with coactivators (NCOAs). In presence of NCOAs, the UBR5-degron is not accessible, preventing its ubiquitination and degradation. In terms of processing, palmitoylated by ZDHHC7 and ZDHHC21. Palmitoylation is required for plasma membrane targeting and for rapid intracellular signaling via ERK and AKT kinases and cAMP generation.

Its subcellular location is the nucleus. The protein resides in the cytoplasm. In terms of biological role, the steroid hormones and their receptors are involved in the regulation of eukaryotic gene expression and affect cellular proliferation and differentiation in target tissues. Transcriptional activator of several progesteron-dependent promoters in a variety of cell types. Involved in activation of SRC-dependent MAPK signaling on hormone stimulation. The polypeptide is Progesterone receptor (PGR) (Hylobates lar (Lar gibbon)).